A 560-amino-acid polypeptide reads, in one-letter code: Chaperonin GroEL 2 (560 aa).

ATP is bound by residues 29–32 (TLGP), 86–90 (DGTTT), Gly-413, 478–480 (NAA), and Asp-494.

It belongs to the chaperonin (HSP60) family. Forms a cylinder of 14 subunits composed of two heptameric rings stacked back-to-back. Interacts with the co-chaperonin GroES.

It localises to the cytoplasm. It carries out the reaction ATP + H2O + a folded polypeptide = ADP + phosphate + an unfolded polypeptide.. Together with its co-chaperonin GroES, plays an essential role in assisting protein folding. The GroEL-GroES system forms a nano-cage that allows encapsulation of the non-native substrate proteins and provides a physical environment optimized to promote and accelerate protein folding. In Nostoc sp. (strain PCC 7120 / SAG 25.82 / UTEX 2576), this protein is Chaperonin GroEL 2.